The following is a 735-amino-acid chain: Photosystem I P700 chlorophyll a apoprotein A2 (735 aa).

Transmembrane regions (helical) follow at residues 46 to 69 (IFAS…FHVA), 135 to 158 (LYTG…LHLQ), 175 to 199 (LNHH…HVAI), 274 to 292 (IAHH…GHMY), 331 to 354 (IHFQ…QHMY), 370 to 396 (AALY…IFFI), 418 to 440 (AIIS…PYVH), and 518 to 536 (FLVH…LILV). [4Fe-4S] cluster-binding residues include Cys-560 and Cys-569. A run of 2 helical transmembrane segments spans residues 576–597 (AFYL…YWHW) and 644–666 (LSVW…MFLI). Residues His-655, Met-663, and Tyr-671 each coordinate chlorophyll a. Trp-672 contributes to the phylloquinone binding site. Residues 708-728 (LVGLAHFSVGYIFTYAAFLIA) form a helical membrane-spanning segment.

Belongs to the PsaA/PsaB family. As to quaternary structure, the PsaA/B heterodimer binds the P700 chlorophyll special pair and subsequent electron acceptors. PSI consists of a core antenna complex that captures photons, and an electron transfer chain that converts photonic excitation into a charge separation. The eukaryotic PSI reaction center is composed of at least 11 subunits. P700 is a chlorophyll a/chlorophyll a' dimer, A0 is one or more chlorophyll a, A1 is one or both phylloquinones and FX is a shared 4Fe-4S iron-sulfur center. is required as a cofactor.

The protein resides in the plastid. It is found in the chloroplast thylakoid membrane. The enzyme catalyses reduced [plastocyanin] + hnu + oxidized [2Fe-2S]-[ferredoxin] = oxidized [plastocyanin] + reduced [2Fe-2S]-[ferredoxin]. Functionally, psaA and PsaB bind P700, the primary electron donor of photosystem I (PSI), as well as the electron acceptors A0, A1 and FX. PSI is a plastocyanin-ferredoxin oxidoreductase, converting photonic excitation into a charge separation, which transfers an electron from the donor P700 chlorophyll pair to the spectroscopically characterized acceptors A0, A1, FX, FA and FB in turn. Oxidized P700 is reduced on the lumenal side of the thylakoid membrane by plastocyanin. The sequence is that of Photosystem I P700 chlorophyll a apoprotein A2 from Zea mays (Maize).